An 868-amino-acid chain; its full sequence is Pro-neuregulin-2, membrane-bound isoform (868 aa).

The segment at 1 to 114 (MRQVCCSALP…AAGGMRRDPA (114 aa)) is disordered. The propeptide occupies 1-127 (MRQVCCSALP…SMLLFGVSLA (127 aa)). Positions 19 to 75 (SSYSYSDSSSSSSSNNSSSSTSSRSSSRSSSRSSRGSTTTTSSSENSGSNSGSIFRP) are enriched in low complexity. Asn-33 and Asn-34 each carry an N-linked (GlcNAc...) asparagine glycan. A compositionally biased stretch (pro residues) spans 76-90 (AAPPEPRPQPQPQPR). The segment covering 91-108 (SPAARRAAARSRAAAAGG) has biased composition (low complexity). Residues 128 to 429 (CYSPSLKSVQ…KEAEELYQKR (302 aa)) lie on the Extracellular side of the membrane. Asn-163, Asn-294, and Asn-362 each carry an N-linked (GlcNAc...) asparagine glycan. An Ig-like C2-type domain is found at 253 to 348 (PKLKKMKSQT…RGRLHVNSVS (96 aa)). Disulfide bonds link Cys-273–Cys-327, Cys-361–Cys-375, Cys-369–Cys-386, and Cys-388–Cys-397. Positions 357–398 (HARKCNETAKSYCVNGGVCYYIEGINQLSCKCPNGFFGQRCL) constitute an EGF-like domain. The helical transmembrane segment at 430–450 (VLTITGICVALLVVGIVCVVA) threads the bilayer. Residues 451-868 (YCKTKKQRRQ…TRAKQDSGPL (418 aa)) are Cytoplasmic-facing. Disordered regions lie at residues 469–488 (MCPAHQNRSLANGPSHPRLD), 516–553 (TFSGSHSCSPSHHCSTATPTSSHRHESHTWSLERSESL), 671–690 (LLRHPAPPGPGPGPGADMQR), 720–806 (ASPF…DGAL), and 823–868 (LRSD…SGPL). A compositionally biased stretch (low complexity) spans 518–530 (SGSHSCSPSHHCS). Basic and acidic residues predominate over residues 538 to 551 (HRHESHTWSLERSE). The segment covering 766-794 (LNGLAAQRARAARDSLSLSSGSGCGSASA) has biased composition (low complexity).

It belongs to the neuregulin family. As to quaternary structure, interacts with ERBB3 and ERBB4. Post-translationally, proteolytic cleavage close to the plasma membrane on the external face leads to the release of the soluble growth factor form. In terms of processing, extensive glycosylation precedes the proteolytic cleavage. In terms of tissue distribution, expressed in most parts of the brain, especially the olfactory bulb and cerebellum where it localizes in granule and Purkinje cells. In the hippocampus, found in the granule cells of the dentate gyrus. In the basal forebrain, found in the cholinergic cells. In the hindbrain, weakly detectable in the motor trigeminal nucleus. Not detected in the hypothalamus. Also found in the liver and in the thymus. Not detected in heart, adrenal gland, or testis.

Its subcellular location is the cell membrane. The protein localises to the secreted. Direct ligand for ERBB3 and ERBB4 tyrosine kinase receptors. Concomitantly recruits ERBB1 and ERBB2 coreceptors, resulting in ligand-stimulated tyrosine phosphorylation and activation of the ERBB receptors. May also promote the heterodimerization with the EGF receptor. The chain is Pro-neuregulin-2, membrane-bound isoform (Nrg2) from Rattus norvegicus (Rat).